The sequence spans 375 residues: Cell division protein ZapE (375 aa).

78–85 (GGVGRGKT) is an ATP binding site.

It belongs to the AFG1 ATPase family. ZapE subfamily. Interacts with FtsZ.

The protein resides in the cytoplasm. Reduces the stability of FtsZ polymers in the presence of ATP. This Escherichia coli O157:H7 protein is Cell division protein ZapE.